The following is a 454-amino-acid chain: Flagellar hook protein FlgE (454 aa).

It belongs to the flagella basal body rod proteins family.

Its subcellular location is the bacterial flagellum basal body. A flexible structure which links the flagellar filament to the drive apparatus in the basal body. Absence of the gene leads to absence of the hook protein, lack of the flagellar filament and thus loss of mobility. Approximately wild-type levels of the flagellar subunits are still produced and accumulate mostly in the cytosol. In Helicobacter mustelae, this protein is Flagellar hook protein FlgE (flgE).